The following is a 290-amino-acid chain: 4-hydroxy-tetrahydrodipicolinate synthase (290 aa).

Position 44 (T44) interacts with pyruvate. The Proton donor/acceptor role is filled by Y132. K160 serves as the catalytic Schiff-base intermediate with substrate. I202 contacts pyruvate.

Belongs to the DapA family. As to quaternary structure, homotetramer; dimer of dimers.

The protein localises to the cytoplasm. It carries out the reaction L-aspartate 4-semialdehyde + pyruvate = (2S,4S)-4-hydroxy-2,3,4,5-tetrahydrodipicolinate + H2O + H(+). Its pathway is amino-acid biosynthesis; L-lysine biosynthesis via DAP pathway; (S)-tetrahydrodipicolinate from L-aspartate: step 3/4. Functionally, catalyzes the condensation of (S)-aspartate-beta-semialdehyde [(S)-ASA] and pyruvate to 4-hydroxy-tetrahydrodipicolinate (HTPA). The polypeptide is 4-hydroxy-tetrahydrodipicolinate synthase (Alkaliphilus oremlandii (strain OhILAs) (Clostridium oremlandii (strain OhILAs))).